The following is a 313-amino-acid chain: Malate dehydrogenase (313 aa).

Residues 11–16 (GSGNIG) and aspartate 35 contribute to the NAD(+) site. Substrate-binding residues include arginine 84 and arginine 90. NAD(+) contacts are provided by residues asparagine 97 and 120–122 (VTN). Positions 122 and 153 each coordinate substrate. The active-site Proton acceptor is histidine 177.

Belongs to the LDH/MDH superfamily. MDH type 3 family.

The catalysed reaction is (S)-malate + NAD(+) = oxaloacetate + NADH + H(+). In terms of biological role, catalyzes the reversible oxidation of malate to oxaloacetate. The protein is Malate dehydrogenase of Ehrlichia ruminantium (strain Welgevonden).